The following is a 120-amino-acid chain: Putative membrane protein insertion efficiency factor (120 aa).

The segment at 93 to 120 (GRSCQTDVDGANDDWNPASKRGERESFV) is disordered.

It belongs to the UPF0161 family.

The protein localises to the cell membrane. Could be involved in insertion of integral membrane proteins into the membrane. This is Putative membrane protein insertion efficiency factor from Mycobacterium bovis (strain ATCC BAA-935 / AF2122/97).